A 307-amino-acid polypeptide reads, in one-letter code: MDEHPPPPFPTVGIIGKPGDPAIAGLVERLLPMLEARGCTALLDEQSMPETGDDRHPQRVSRETLLDACDLIIAIGGDGTLIHIARAVAGRRDVALMGINRGRLGFLVDIAPEHLDEVAQILDGQHVVDERLLLHAEIRSNEDDTLLREDVAINEVVLHRWNTARMIELVTRIDGEPLSDHRSDGLILATPTGSTAYAMAGGGPIVHPNLHAMLLVPVCPHTLSNRPLVVDGSSRIEIDVHPRFIEHVRVSCDSQNDLTLQAGSRLVVRAHPSPVRLVHPPGYSYFNLLRAKLGWGGPLCNIEPFGA.

D78 functions as the Proton acceptor in the catalytic mechanism. NAD(+) contacts are provided by residues 78 to 79 (DG), H83, 154 to 155 (NE), R165, R182, D184, and Q255.

The protein belongs to the NAD kinase family. It depends on a divalent metal cation as a cofactor.

It is found in the cytoplasm. The enzyme catalyses NAD(+) + ATP = ADP + NADP(+) + H(+). Functionally, involved in the regulation of the intracellular balance of NAD and NADP, and is a key enzyme in the biosynthesis of NADP. Catalyzes specifically the phosphorylation on 2'-hydroxyl of the adenosine moiety of NAD to yield NADP. The chain is NAD kinase from Halorhodospira halophila (strain DSM 244 / SL1) (Ectothiorhodospira halophila (strain DSM 244 / SL1)).